Consider the following 231-residue polypeptide: Protein HHL1, chloroplastic (231 aa).

Residues 1 to 39 (MEVSMSLNALTRLPLKNTGRFEEVGLARHSLFSSRTACR) constitute a chloroplast transit peptide. A helical transmembrane segment spans residues 93-113 (YLWYPLSIIAGGTTAKIMVAA). Residues 206–231 (SFGKLSSLNPGSDEKTEETSDEKAKA) are disordered. A compositionally biased stretch (basic and acidic residues) spans 217-231 (SDEKTEETSDEKAKA).

Interacts with psbB, psbC and LQY1, but not with psbA or psbD.

The protein resides in the plastid. It is found in the chloroplast thylakoid membrane. In terms of biological role, involved in photoprotection. Forms a complex with LQY1 that is involved in the repair and reassembly cycle of the PSII-LHCII supercomplex under high-light conditions. May function in guiding the release of psbC from PSII core monomers. This chain is Protein HHL1, chloroplastic, found in Arabidopsis thaliana (Mouse-ear cress).